We begin with the raw amino-acid sequence, 186 residues long: ADP-ribosylation factor-like protein 8B (186 aa).

The note=Mediates targeting to membranes intramembrane region spans 1–19; the sequence is MLALISRLLDWFRSLFWKE. GTP-binding positions include 29–35, 71–75, and 130–133; these read QYSGKTT, DIGGQ, and NKRD. Lysine 141 is covalently cross-linked (Glycyl lysine isopeptide (Lys-Gly) (interchain with G-Cter in ubiquitin)).

Belongs to the small GTPase superfamily. Arf family. In terms of assembly, interacts with tubulin. Interacts with BORCS5; recruits ARL8B to lysosomes. Interacts with VPS41; the interaction mediates the recruitment of the HOPS complex to lysosomes. Interacts (GTP-bound form) with PLEKHM2 (via RUN domain); the interaction is required to recruit the motor protein kinesin-1 on lysosomes. Interacts (GTP-bound form) with PLEKHM1 (via RUN domain); the interaction is required for PLEKHM1 localization to lysosomes and for ARL8B function in delivery and degradation of endocytic and autophagic cargo in lysosomes. PLEKHM1 and PLEKHM2 compete for interaction with ARL8B. Interacts (GTP-bound form) with RUFY1; the interaction is required for RUFY1 endosomal location. When GTP-bound, interacts with RUFY3 and RUFY4, but not with RUFY1, nor RUFY2. Ubiquitinated at Lys-141 by RNF167, leading to its degradation.

The protein localises to the late endosome membrane. The protein resides in the lysosome membrane. It localises to the cytoplasm. Its subcellular location is the cytoskeleton. It is found in the spindle. The protein localises to the cell projection. The protein resides in the axon. It localises to the synapse. Its subcellular location is the cytolytic granule membrane. It is found in the early endosome membrane. The enzyme catalyses GTP + H2O = GDP + phosphate + H(+). In terms of biological role, small GTPase which cycles between active GTP-bound and inactive GDP-bound states. In its active state, binds to a variety of effector proteins playing a key role in the regulation of lysosomal positioning which is important for nutrient sensing, natural killer cell-mediated cytotoxicity and antigen presentation. Along with its effectors, orchestrates lysosomal transport and fusion. Localizes specifically to lysosomal membranes and mediates anterograde lysosomal motility by recruiting PLEKHM2, which in turn recruits the motor protein kinesin-1 on lysosomes. Required for lysosomal and cytolytic granule exocytosis. Critical factor involved in NK cell-mediated cytotoxicity. Drives the polarization of cytolytic granules and microtubule-organizing centers (MTOCs) toward the immune synapse between effector NK lymphocytes and target cells. In neurons, mediates the anterograde axonal long-range transport of presynaptic lysosome-related vesicles required for presynaptic biogenesis and synaptic function. Also acts as a regulator of endosome to lysosome trafficking pathways of special significance for host defense. Recruits RUFY1 onto early endosomes regulating endosomes to trans-Golgi network proteins retrieval. Regulates cargo trafficking to lysosomes by binding to PLEKHM1 and recruiting the HOPS subunit VPS41, resulting in functional assembly of the HOPS complex on lysosomal membranes. Plays an important role in cargo delivery to lysosomes for antigen presentation and microbial killing. Directs the intersection of CD1d with lipid antigens in lysosomes, and plays a role in intersecting phagosomes with lysosomes to generate phagolysosomes that kill microbes. Involved in the process of MHC II presentation. Regulates the delivery of antigens to lysosomes and the formation of MHC II-peptide complexes through the recruitment of the HOPS complex to lysosomes allowing the fusion of late endosomes to lysosomes. May play a role in chromosome segregation. This is ADP-ribosylation factor-like protein 8B (ARL8B) from Macaca fascicularis (Crab-eating macaque).